Consider the following 601-residue polypeptide: Regulatory protein BlaR1 (601 aa).

The Extracellular segment spans residues 1–8 (MSSSFFIP). The helical transmembrane segment at 9–26 (FLVSQILLSLFFSIIILI) threads the bilayer. Residues 27–35 (KKLLRTQIT) are Cytoplasmic-facing. The chain crosses the membrane as a helical span at residues 36 to 52 (VGTHYYISVISLLALIA). Residues 53–115 (PFIPFHFLKS…EQSSSKMIDS (63 aa)) are Extracellular-facing. The chain crosses the membrane as a helical span at residues 116 to 133 (AFFAVWILGVAVMLLATL). Residues 134–322 (YSNLKIGKIK…QTASPLLKAK (189 aa)) are Cytoplasmic-facing. The helical transmembrane segment at 323–339 (SALVFTLVLGAILAGTP) threads the bilayer. At 340–601 (SVSILAMQKE…KKGIYPSVSR (262 aa)) the chain is on the extracellular side. The tract at residues 354–601 (PGTNVEYEDY…KKGIYPSVSR (248 aa)) is beta-lactam antibiotic sensor domain. Catalysis depends on Ser402, which acts as the Acyl-ester intermediate. Lys405 carries the post-translational modification N6-carboxylysine.

The protein belongs to the peptidase M56 family. In terms of processing, carboxylation occurs on two lysine residues. Carboxylation at 'Lys-405' activates the active site serine residue for acylation. On acylation, the lysine side chain experiences a spontaneous decarboxylation that entraps the sensor in its activated state.

Its subcellular location is the cell membrane. Functionally, integral membrane protein involved in sensing of the presence of beta-lactam antibiotics and transduction of the information to the cytoplasm. Mechanistically, activation of the signal transducer involves acylation of a serine in the C-terminal sensor domain upon binding of the beta-lactam antibiotic. In turn, a conformational change occurs and the signal is transmitted from the cell surface to the cytoplasm. There, the zinc protease domain is activated and initiates autoproteolysis as well as cleavage of the transcriptional repressor BlaI leading to derepression of antibiotic resistance genes. This Bacillus licheniformis protein is Regulatory protein BlaR1 (blaR1).